A 297-amino-acid chain; its full sequence is tRNA pseudouridine synthase B (297 aa).

Asp44 (nucleophile) is an active-site residue.

This sequence belongs to the pseudouridine synthase TruB family. Type 1 subfamily.

It carries out the reaction uridine(55) in tRNA = pseudouridine(55) in tRNA. In terms of biological role, responsible for synthesis of pseudouridine from uracil-55 in the psi GC loop of transfer RNAs. In Mycobacterium sp. (strain JLS), this protein is tRNA pseudouridine synthase B.